Reading from the N-terminus, the 191-residue chain is MYGPKDHGWIEVVAGPMYSGKTEELIRRIRRAEIAKQKVQVFKPEIDNRYSKQDVVSHAGDKIQSVPVRSSKEILEKLLDDTDVIGIDEAQFFDDSLVEIVSKIANNNRRVICAGLDMDFKGEPFGPMPKLMAIAEFVDKIQAVCMVCNNPATRTQRLINGKPAKKSDPVVLIGAQESYEARCRKCHRVPK.

ATP-binding positions include Gly-15 to Thr-22 and Asp-88 to Gln-91. Glu-89 functions as the Proton acceptor in the catalytic mechanism. Zn(2+)-binding residues include Cys-145, Cys-148, Cys-183, and Cys-186.

This sequence belongs to the thymidine kinase family. As to quaternary structure, homotetramer.

The protein localises to the cytoplasm. The enzyme catalyses thymidine + ATP = dTMP + ADP + H(+). This Clostridium botulinum (strain Loch Maree / Type A3) protein is Thymidine kinase.